Consider the following 428-residue polypeptide: Ribosomal RNA small subunit methyltransferase B (428 aa).

S-adenosyl-L-methionine contacts are provided by residues 253 to 259 (CAAPGGK), Asp276, Asp302, and Asp321. Cys374 acts as the Nucleophile in catalysis.

Belongs to the class I-like SAM-binding methyltransferase superfamily. RsmB/NOP family.

It is found in the cytoplasm. It catalyses the reaction cytidine(967) in 16S rRNA + S-adenosyl-L-methionine = 5-methylcytidine(967) in 16S rRNA + S-adenosyl-L-homocysteine + H(+). In terms of biological role, specifically methylates the cytosine at position 967 (m5C967) of 16S rRNA. In Enterobacter sp. (strain 638), this protein is Ribosomal RNA small subunit methyltransferase B.